The following is a 178-amino-acid chain: Ribosome maturation factor RimM (178 aa).

In terms of domain architecture, PRC barrel spans Asp-101 to Phe-178.

The protein belongs to the RimM family. In terms of assembly, binds ribosomal protein uS19.

The protein resides in the cytoplasm. Functionally, an accessory protein needed during the final step in the assembly of 30S ribosomal subunit, possibly for assembly of the head region. Essential for efficient processing of 16S rRNA. May be needed both before and after RbfA during the maturation of 16S rRNA. It has affinity for free ribosomal 30S subunits but not for 70S ribosomes. This is Ribosome maturation factor RimM from Stutzerimonas stutzeri (strain A1501) (Pseudomonas stutzeri).